We begin with the raw amino-acid sequence, 341 residues long: MASVASSTVFASSLPHHRATTRAPPTPPRIPRRARLPGRSVVSCLPKRGSEKLVVTRASDEEGPPEPAGQGRGGGRAWPSLDASSCGLALAAAAGVLMLQGSQQALAGTEFMGMQDVVGDLGDISTGFASAFLLIFFSELGDRTFFIAALLAARNSGAIIFLGTFGALAVMTIISVVLGRAFHYVDGIIPFSFGGTDFPVDDFLAACLLVYYGITTLLDAASGDEEKMNEEQEEAELAVSKFLGNGAGIISAASTIASTFVLVFIAEWGDKSFFSTIALAAASSPLGVIAGSLAGHAVATLIAVLGGSLLGTFLSEKIVAYIGGSLFLAFAAVTLVEIVNS.

Positions 1 to 13 are enriched in low complexity; the sequence is MASVASSTVFASS. 2 disordered regions span residues 1-41 and 54-76; these read MASV…GRSV and VVTR…GGGR. The transit peptide at 1-57 directs the protein to the chloroplast; sequence MASVASSTVFASSLPHHRATTRAPPTPPRIPRRARLPGRSVVSCLPKRGSEKLVVTR. Transmembrane regions (helical) follow at residues 79 to 99, 117 to 137, 158 to 178, 203 to 223, 246 to 266, 286 to 306, and 318 to 338; these read PSLD…VLML, VVGD…LIFF, AIIF…SVVL, FLAA…AASG, GAGI…VFIA, LGVI…AVLG, and IVAY…LVEI.

It belongs to the GDT1 family.

The protein localises to the plastid. It localises to the chloroplast membrane. This Oryza sativa subsp. japonica (Rice) protein is GDT1-like protein 1, chloroplastic.